A 206-amino-acid polypeptide reads, in one-letter code: Nucleoside triphosphate pyrophosphatase (206 aa).

Residue D76 is the Proton acceptor of the active site.

It belongs to the Maf family. Requires a divalent metal cation as cofactor.

Its subcellular location is the cytoplasm. The catalysed reaction is a ribonucleoside 5'-triphosphate + H2O = a ribonucleoside 5'-phosphate + diphosphate + H(+). It carries out the reaction a 2'-deoxyribonucleoside 5'-triphosphate + H2O = a 2'-deoxyribonucleoside 5'-phosphate + diphosphate + H(+). Nucleoside triphosphate pyrophosphatase. May have a dual role in cell division arrest and in preventing the incorporation of modified nucleotides into cellular nucleic acids. The sequence is that of Nucleoside triphosphate pyrophosphatase from Streptomyces coelicolor (strain ATCC BAA-471 / A3(2) / M145).